Consider the following 170-residue polypeptide: Thioredoxin-like protein YneN (170 aa).

Residues 5-23 form a helical membrane-spanning segment; sequence WLAGILLIMLVGYTGWNLY. The Thioredoxin domain maps to 33-170; sequence IQEGQQAPDF…KEMEQKLDLD (138 aa). Cysteines 71 and 74 form a disulfide.

Belongs to the thioredoxin family.

The protein localises to the cell membrane. This Bacillus subtilis (strain 168) protein is Thioredoxin-like protein YneN (yneN).